A 294-amino-acid chain; its full sequence is GDP-6-deoxy-D-talose 4-dehydrogenase (294 aa).

NAD(+) is bound by residues 11–12 (FI), 38–39 (DL), 60–64 (LAALT), Thr104, Tyr128, Lys132, and Phe154. 2 residues coordinate substrate: Thr104 and Tyr128. Tyr128 (proton acceptor) is an active-site residue. Substrate-binding residues include Asn155 and Arg190.

The protein belongs to the NAD(P)-dependent epimerase/dehydratase family.

It carries out the reaction GDP-6-deoxy-alpha-D-talose + NAD(+) = GDP-4-dehydro-alpha-D-rhamnose + NADH + H(+). The enzyme catalyses GDP-6-deoxy-alpha-D-talose + NADP(+) = GDP-4-dehydro-alpha-D-rhamnose + NADPH + H(+). Its pathway is bacterial outer membrane biogenesis; LPS O-antigen biosynthesis. Its function is as follows. Catalyzes the conversion of GDP-4-dehydro-6-deoxy-D-mannose to GDP-6-deoxy-D-talose. The polypeptide is GDP-6-deoxy-D-talose 4-dehydrogenase (tld) (Aggregatibacter actinomycetemcomitans (Actinobacillus actinomycetemcomitans)).